We begin with the raw amino-acid sequence, 159 residues long: Eukaryotic translation initiation factor 5A-4 (159 aa).

Basic and acidic residues predominate over residues 1–12 (MSDEEHQFESKA). The tract at residues 1–21 (MSDEEHQFESKADAGASKTYP) is disordered. A Hypusine modification is found at K52.

Belongs to the eIF-5A family. Post-translationally, lys-52 undergoes hypusination, a unique post-translational modification that consists in the addition of a butylamino group from spermidine to lysine side chain, leading to the formation of the unusual amino acid hypusine. eIF-5As are the only known proteins to undergo this modification, which is essential for their function.

Functionally, translation factor that promotes translation elongation and termination, particularly upon ribosome stalling at specific amino acid sequence contexts. Binds between the exit (E) and peptidyl (P) site of the ribosome and promotes rescue of stalled ribosome: specifically required for efficient translation of polyproline-containing peptides as well as other motifs that stall the ribosome. Acts as a ribosome quality control (RQC) cofactor by joining the RQC complex to facilitate peptidyl transfer during CAT tailing step. In Solanum tuberosum (Potato), this protein is Eukaryotic translation initiation factor 5A-4 (EIF5A4).